A 358-amino-acid chain; its full sequence is 3-dehydroquinate synthase (358 aa).

Residues 75-80 (SGEGSK), 109-113 (GVLGD), 133-134 (TT), Lys-146, and Lys-155 each bind NAD(+). Glu-188, His-245, and His-262 together coordinate Zn(2+).

This sequence belongs to the sugar phosphate cyclases superfamily. Dehydroquinate synthase family. Co(2+) serves as cofactor. The cofactor is Zn(2+). Requires NAD(+) as cofactor.

The protein resides in the cytoplasm. The catalysed reaction is 7-phospho-2-dehydro-3-deoxy-D-arabino-heptonate = 3-dehydroquinate + phosphate. Its pathway is metabolic intermediate biosynthesis; chorismate biosynthesis; chorismate from D-erythrose 4-phosphate and phosphoenolpyruvate: step 2/7. In terms of biological role, catalyzes the conversion of 3-deoxy-D-arabino-heptulosonate 7-phosphate (DAHP) to dehydroquinate (DHQ). The chain is 3-dehydroquinate synthase from Methylacidiphilum infernorum (isolate V4) (Methylokorus infernorum (strain V4)).